The following is a 101-amino-acid chain: UPF0235 protein MmarC5_0538 (101 aa).

Belongs to the UPF0235 family.

The sequence is that of UPF0235 protein MmarC5_0538 from Methanococcus maripaludis (strain C5 / ATCC BAA-1333).